The following is a 213-amino-acid chain: Orotate phosphoribosyltransferase (213 aa).

Lys26 serves as a coordination point for 5-phospho-alpha-D-ribose 1-diphosphate. 34–35 provides a ligand contact to orotate; that stretch reads FF. 5-phospho-alpha-D-ribose 1-diphosphate contacts are provided by residues 72-73, Arg99, Lys100, Lys103, His105, and 124-132; these read YK and DDVITAGTA. The orotate site is built by Thr128 and Arg156.

This sequence belongs to the purine/pyrimidine phosphoribosyltransferase family. PyrE subfamily. As to quaternary structure, homodimer. Mg(2+) serves as cofactor.

It catalyses the reaction orotidine 5'-phosphate + diphosphate = orotate + 5-phospho-alpha-D-ribose 1-diphosphate. The protein operates within pyrimidine metabolism; UMP biosynthesis via de novo pathway; UMP from orotate: step 1/2. Catalyzes the transfer of a ribosyl phosphate group from 5-phosphoribose 1-diphosphate to orotate, leading to the formation of orotidine monophosphate (OMP). This is Orotate phosphoribosyltransferase from Shigella flexneri.